The sequence spans 264 residues: Ribosomal RNA small subunit methyltransferase J (264 aa).

S-adenosyl-L-methionine-binding positions include 111–112, 127–128, and aspartate 180; these read RD and ER.

It belongs to the methyltransferase superfamily. RsmJ family.

The protein resides in the cytoplasm. It catalyses the reaction guanosine(1516) in 16S rRNA + S-adenosyl-L-methionine = N(2)-methylguanosine(1516) in 16S rRNA + S-adenosyl-L-homocysteine + H(+). Functionally, specifically methylates the guanosine in position 1516 of 16S rRNA. The polypeptide is Ribosomal RNA small subunit methyltransferase J (Alkalilimnicola ehrlichii (strain ATCC BAA-1101 / DSM 17681 / MLHE-1)).